We begin with the raw amino-acid sequence, 216 residues long: Maintenance of carboxysome distribution protein A (216 aa).

ATP is bound by residues glycine 18, glycine 19, glycine 21, lysine 22, threonine 23, threonine 24, and glutamine 47. Threonine 23 contributes to the Mg(2+) binding site.

Belongs to the ParA family. McdA subfamily. Homodimerizes in the presence of ATP. Each subunit binds 1 ATP molecule; some residues cross the dimer interface to contact ATP in the other subunit. Forms a complex with McdB.

Its subcellular location is the cytoplasm. It is found in the nucleoid. The enzyme catalyses ATP + H2O = ADP + phosphate + H(+). In terms of biological role, mcdA and McdB together mediate carboxysome (Cb) spacing, size, ultrastructure and probably inheritance in the cell, together they prevent Cb aggregation. McdA is an ATPase that forms dynamic gradients on the nucleoid in response to adapter protein McdB, which associates with carboxysomes. The interplay between McdA gradients on the nucleoid and McdB-bound carboxysomes result in the equal spacing of Cbs along the cell length. Incorrect positioning (aggregation) of carboxysomes results in reduced CO(2) fixation by encapsulated ribulose-1,5-bisphosphate carboxylase (RuBisCO, cbbL/cbbS), which leads to slower growth. This chain is Maintenance of carboxysome distribution protein A, found in Gloeobacter kilaueensis (strain ATCC BAA-2537 / CCAP 1431/1 / ULC 316 / JS1).